A 264-amino-acid polypeptide reads, in one-letter code: Apolipoprotein A-I (264 aa).

The signal sequence occupies residues 1–18 (MKAVVLAVALVFLTGSQA). Repeat copies occupy residues 67-88 (LNLLENWDTLGTTVGQLQERLG) and 89-110 (PLTRDFWDNLEKETDWLRQEMN). Residues 67–264 (LNLLENWDTL…DKARETLTAQ (198 aa)) form a 10 X approximate tandem repeats region. Position 109 is a methionine sulfoxide (methionine 109). The stretch at 111–121 (KDLEEVKQNVQ) is one 3; half-length repeat. A run of 3 repeats spans residues 122-143 (PYLDEFQKKWNEDVELYRQRVA), 144-165 (PLGAELHESARQKLQELQGKLS), and 166-187 (PVAEEFRDRMRTHVDALRTQLA). A 7; truncated repeat occupies 188–207 (PHSDKLRESLAQRLAELKSN). Repeat 8 spans residues 208–229 (PTLNEYHTRAKTHLNTFGEKAR). The 9; half-length repeat unit spans residues 230 to 240 (PALEDLRHTLI). Repeat unit 10 spans residues 241-264 (PILDTLKTKVKSVIDKARETLTAQ).

Belongs to the apolipoprotein A1/A4/E family. In terms of assembly, homodimer. Interacts with APOA1BP and CLU. Component of a sperm activating protein complex (SPAP), consisting of APOA1, an immunoglobulin heavy chain, an immunoglobulin light chain and albumin. Interacts with NDRG1. Interacts with SCGB3A2. Interacts with NAXE and YJEFN3. Post-translationally, glycosylated. In terms of processing, palmitoylated. Phosphorylation sites are present in the extracellular medium.

It localises to the secreted. Its function is as follows. Participates in the reverse transport of cholesterol from tissues to the liver for excretion by promoting cholesterol efflux from tissues and by acting as a cofactor for the lecithin cholesterol acyltransferase (LCAT). As part of the SPAP complex, activates spermatozoa motility. The protein is Apolipoprotein A-I (Apoa1) of Mus pahari (Gairdner's shrew-mouse).